We begin with the raw amino-acid sequence, 870 residues long: Elastin (870 aa).

The signal sequence occupies residues 1–27 (MAGLTAAVPQPGVLLILLLNLLHPAQP). 4-hydroxyproline is present on residues Pro-39 and Pro-75. Pro-87 is subject to Hydroxyproline. Position 105 is a 4-hydroxyproline (Pro-105). Allysine occurs at positions 122 and 126. 4-hydroxyproline is present on residues Pro-207, Pro-220, Pro-223, and Pro-244. Allysine occurs at positions 290 and 309. Residue Pro-338 is modified to 4-hydroxyproline. An allysine mark is found at Lys-360 and Lys-363. The residue at position 375 (Pro-375) is a Hydroxyproline. 4-hydroxyproline is present on residues Pro-402 and Pro-408. 2 positions are modified to hydroxyproline: Pro-413 and Pro-418. An allysine mark is found at Lys-434, Lys-438, Lys-441, Lys-485, and Lys-488. A 4-hydroxyproline mark is found at Pro-518 and Pro-539. 5 positions are modified to allysine: Lys-554, Lys-558, Lys-615, Lys-619, and Lys-623. Pro-637, Pro-646, Pro-662, and Pro-670 each carry 4-hydroxyproline. Residues Lys-677 and Lys-680 each carry the allysine modification. The residue at position 715 (Pro-715) is a 4-hydroxyproline. Allysine occurs at positions 730, 734, 793, and 796. The residue at position 842 (Pro-842) is a 4-hydroxyproline. Cys-860 and Cys-865 form a disulfide bridge.

Belongs to the elastin family. As to quaternary structure, the polymeric elastin chains are cross-linked together into an extensible 3D network. Forms a ternary complex with BGN and MFAP2. Interacts with MFAP2 via divalent cations (calcium &gt; magnesium &gt; manganese) in a dose-dependent and saturating manner. Interacts with FBLN5 and FBN1. Forms a ternary complex with FBN1 and FBLN2 or FBLN5. Interacts with MFAP4 in a Ca (2+)-dependent manner; this interaction promotes ELN self-assembly. Interacts with EFEMP2 with moderate affinity. In terms of processing, elastin is formed through the cross-linking of its soluble precursor tropoelastin. Cross-linking is initiated through the action of lysyl oxidase on exposed lysines to form allysine. Subsequent spontaneous condensation reactions with other allysine or unmodified lysine residues result in various bi-, tri-, and tetrafunctional cross-links. The most abundant cross-links in mature elastin fibers are lysinonorleucine, allysine aldol, desmosine, and isodesmosine. Hydroxylation on proline residues within the sequence motif, GXPG, is most likely to be 4-hydroxy as this fits the requirement for 4-hydroxylation in vertebrates.

It localises to the secreted. The protein localises to the extracellular space. It is found in the extracellular matrix. Its function is as follows. Major structural protein of tissues such as aorta and nuchal ligament, which must expand rapidly and recover completely. Molecular determinant of the late arterial morphogenesis, stabilizing arterial structure by regulating proliferation and organization of vascular smooth muscle. The polypeptide is Elastin (Eln) (Rattus norvegicus (Rat)).